Reading from the N-terminus, the 398-residue chain is MTRIEAVRYRPILDSRGNKTVEAEVTTDDGGFGRAAAPSGASTGEHEAVELPVGEAIAAGRERIAPRLEGREFAGDQRGVDAALHAADDTTDFSAVGANVAVATSMAAAKAAADVLGVHTYQHLGGALRGRNFPVPLGNVLGGGAHAADATAIQEFLVAATGAPSVRQAVFANAAVHQRVKDRLDDDGVPAAKGDEGAWAPSIDDATAFDVVAGAAAEVADEFGFDVRLGLDLAAAERYDGDEYVFGDDRRSTAAQIEYVAGLVSEYDLAYVEDPLDENDFEAFAELTDRVGDETLVCGDDLFVTNTERLQRGIDAGAANSILVKPNQIGTLTDAVDAIELATRNGYDAVVSHRSGETEDTTIAHLAVATDAPFIKTGAVGGERTAKLNELIRIADEA.

A (2R)-2-phosphoglycerate-binding site is contributed by Gln-154. The active-site Proton donor is the Glu-196. Positions 232, 273, and 300 each coordinate Mg(2+). (2R)-2-phosphoglycerate contacts are provided by Lys-325, Arg-354, Ser-355, and Lys-376. The active-site Proton acceptor is the Lys-325.

This sequence belongs to the enolase family. Requires Mg(2+) as cofactor.

The protein resides in the cytoplasm. It is found in the secreted. The protein localises to the cell surface. It catalyses the reaction (2R)-2-phosphoglycerate = phosphoenolpyruvate + H2O. Its pathway is carbohydrate degradation; glycolysis; pyruvate from D-glyceraldehyde 3-phosphate: step 4/5. Functionally, catalyzes the reversible conversion of 2-phosphoglycerate (2-PG) into phosphoenolpyruvate (PEP). It is essential for the degradation of carbohydrates via glycolysis. The protein is Enolase of Halobacterium salinarum (strain ATCC 700922 / JCM 11081 / NRC-1) (Halobacterium halobium).